Reading from the N-terminus, the 377-residue chain is Progesterone receptor (377 aa).

The modulating, Pro-Rich stretch occupies residues 1–15 (EASQSPQYSFESLPQ). Positions 16–90 (KICLICGDEA…AGMVLGGRKF (75 aa)) form a DNA-binding region, nuclear receptor. 2 NR C4-type zinc fingers span residues 18 to 38 (CLIC…CGSC) and 54 to 78 (CAGR…LRKC). A Phosphoserine modification is found at Ser-127. In terms of domain architecture, NR LBD spans 130–364 (QDLQLIPPLI…EFPEMMSEVI (235 aa)). The AF2; mediates transcriptional activation stretch occupies residues 138–377 (LINLLMSIEP…LPKILAGMVK (240 aa)).

It belongs to the nuclear hormone receptor family. NR3 subfamily. As to quaternary structure, interacts with CUEDC2, SMARD1 and with UNC45A. Interacts with PRMT2. Interacts with NCOA2 and NCOA1. Interacts with KLF9. Interacts with GTF2B. Palmitoylated by ZDHHC7 and ZDHHC21. Palmitoylation is required for plasma membrane targeting and for rapid intracellular signaling via ERK and AKT kinases and cAMP generation.

It is found in the nucleus. In terms of biological role, the steroid hormones and their receptors are involved in the regulation of eukaryotic gene expression and affect cellular proliferation and differentiation in target tissues. Transcriptional activator of several progesteron-dependent promoters in a variety of cell types. Involved in activation of SRC-dependent MAPK signaling on hormone stimulation. This chain is Progesterone receptor (PGR), found in Ovis aries (Sheep).